A 365-amino-acid polypeptide reads, in one-letter code: Anhydro-N-acetylmuramic acid kinase (365 aa).

12–19 is an ATP binding site; that stretch reads GTSLDGID.

It belongs to the anhydro-N-acetylmuramic acid kinase family.

The enzyme catalyses 1,6-anhydro-N-acetyl-beta-muramate + ATP + H2O = N-acetyl-D-muramate 6-phosphate + ADP + H(+). The protein operates within amino-sugar metabolism; 1,6-anhydro-N-acetylmuramate degradation. It functions in the pathway cell wall biogenesis; peptidoglycan recycling. In terms of biological role, catalyzes the specific phosphorylation of 1,6-anhydro-N-acetylmuramic acid (anhMurNAc) with the simultaneous cleavage of the 1,6-anhydro ring, generating MurNAc-6-P. Is required for the utilization of anhMurNAc either imported from the medium or derived from its own cell wall murein, and thus plays a role in cell wall recycling. This chain is Anhydro-N-acetylmuramic acid kinase, found in Rhizorhabdus wittichii (strain DSM 6014 / CCUG 31198 / JCM 15750 / NBRC 105917 / EY 4224 / RW1) (Sphingomonas wittichii).